An 888-amino-acid polypeptide reads, in one-letter code: Alanine--tRNA ligase (888 aa).

Residues H564, H568, C676, and H680 each contribute to the Zn(2+) site.

The protein belongs to the class-II aminoacyl-tRNA synthetase family. It depends on Zn(2+) as a cofactor.

It localises to the cytoplasm. The enzyme catalyses tRNA(Ala) + L-alanine + ATP = L-alanyl-tRNA(Ala) + AMP + diphosphate. Catalyzes the attachment of alanine to tRNA(Ala) in a two-step reaction: alanine is first activated by ATP to form Ala-AMP and then transferred to the acceptor end of tRNA(Ala). Also edits incorrectly charged Ser-tRNA(Ala) and Gly-tRNA(Ala) via its editing domain. The chain is Alanine--tRNA ligase from Bartonella tribocorum (strain CIP 105476 / IBS 506).